Reading from the N-terminus, the 227-residue chain is MICOS complex subunit MIC19 (227 aa).

The N-myristoyl glycine moiety is linked to residue G2. At S29 the chain carries Phosphoserine. A disordered region spans residues 34–60 (DRMKETSPSGPKSQRYSGTYGASVSDE). Over residues 39–55 (TSPSGPKSQRYSGTYGA) the composition is skewed to polar residues. Y49 is subject to Phosphotyrosine. Residues S50, S56, and S58 each carry the phosphoserine modification. Residue K142 is modified to N6-acetyllysine. One can recognise a CHCH domain in the interval 180-222 (HPVCADLQAQILQCYRQNTQQTLSCSALASQYMRCVNQAKQST). 2 short sequence motifs (cx9C motif) span residues 183–193 (CADLQAQILQC) and 204–214 (CSALASQYMRC). Cystine bridges form between C183-C214 and C193-C204.

The protein belongs to the MICOS complex subunit Mic19 family. Metazoan Mic19 subfamily. As to quaternary structure, component of the mitochondrial contact site and cristae organizing system (MICOS) complex, composed of at least MICOS10/MIC10, CHCHD3/MIC19, CHCHD6/MIC25, APOOL/MIC27, IMMT/MIC60, APOO/MIC23/MIC26 and MICOS13/MIC13. This complex was also known under the names MINOS or MitOS complex. The MICOS complex associates with mitochondrial outer membrane proteins SAMM50, MTX1 and MTX2 (together described as components of the mitochondrial outer membrane sorting assembly machinery (SAM) complex) and DNAJC11, mitochondrial inner membrane protein TMEM11 and with HSPA9. The MICOS and SAM complexes together with DNAJC11 are part of a large protein complex spanning both membranes termed the mitochondrial intermembrane space bridging (MIB) complex. Interacts with HSPA1A/HSPA1B and OPA1, preferentially with the soluble OPA1 form. Interacts with IMMT/MIC60.

The protein resides in the mitochondrion inner membrane. The protein localises to the cytoplasm. Its subcellular location is the nucleus. It localises to the mitochondrion. Functionally, component of the MICOS complex, a large protein complex of the mitochondrial inner membrane that plays crucial roles in the maintenance of crista junctions, inner membrane architecture, and formation of contact sites to the outer membrane. Has also been shown to function as a transcription factor which binds to the BAG1 promoter and represses BAG1 transcription. Plays an important role in the maintenance of the MICOS complex stability and the mitochondrial cristae morphology. The sequence is that of MICOS complex subunit MIC19 (CHCHD3) from Bos taurus (Bovine).